A 441-amino-acid polypeptide reads, in one-letter code: Cysteine--tRNA ligase (441 aa).

Residue cysteine 24 participates in Zn(2+) binding. The short motif at 26 to 36 is the 'HIGH' region element; it reads PTIYDYIHIGN. Positions 204, 230, and 234 each coordinate Zn(2+). Positions 262-266 match the 'KMSKS' region motif; that stretch reads KMSKS. Lysine 265 contributes to the ATP binding site.

It belongs to the class-I aminoacyl-tRNA synthetase family. As to quaternary structure, monomer. The cofactor is Zn(2+).

It is found in the cytoplasm. The catalysed reaction is tRNA(Cys) + L-cysteine + ATP = L-cysteinyl-tRNA(Cys) + AMP + diphosphate. In Mesoplasma florum (strain ATCC 33453 / NBRC 100688 / NCTC 11704 / L1) (Acholeplasma florum), this protein is Cysteine--tRNA ligase.